A 192-amino-acid polypeptide reads, in one-letter code: Cytidylate kinase (192 aa).

7–15 (GPPGSGKST) contributes to the ATP binding site.

It belongs to the cytidylate kinase family. Type 2 subfamily.

It localises to the cytoplasm. It catalyses the reaction CMP + ATP = CDP + ADP. The enzyme catalyses dCMP + ATP = dCDP + ADP. The chain is Cytidylate kinase from Halobacterium salinarum (strain ATCC 29341 / DSM 671 / R1).